The following is a 195-amino-acid chain: Imidazoleglycerol-phosphate dehydratase (195 aa).

This sequence belongs to the imidazoleglycerol-phosphate dehydratase family.

Its subcellular location is the cytoplasm. The catalysed reaction is D-erythro-1-(imidazol-4-yl)glycerol 3-phosphate = 3-(imidazol-4-yl)-2-oxopropyl phosphate + H2O. Its pathway is amino-acid biosynthesis; L-histidine biosynthesis; L-histidine from 5-phospho-alpha-D-ribose 1-diphosphate: step 6/9. This Geobacillus sp. (strain WCH70) protein is Imidazoleglycerol-phosphate dehydratase.